We begin with the raw amino-acid sequence, 156 residues long: Ribosomal RNA large subunit methyltransferase H (156 aa).

S-adenosyl-L-methionine-binding positions include glycine 104 and 123–128; that span reads LSPMVM.

This sequence belongs to the RNA methyltransferase RlmH family. In terms of assembly, homodimer.

The protein localises to the cytoplasm. The enzyme catalyses pseudouridine(1915) in 23S rRNA + S-adenosyl-L-methionine = N(3)-methylpseudouridine(1915) in 23S rRNA + S-adenosyl-L-homocysteine + H(+). Its function is as follows. Specifically methylates the pseudouridine at position 1915 (m3Psi1915) in 23S rRNA. The protein is Ribosomal RNA large subunit methyltransferase H of Bdellovibrio bacteriovorus (strain ATCC 15356 / DSM 50701 / NCIMB 9529 / HD100).